The primary structure comprises 497 residues: NAD(P)H-quinone oxidoreductase chain 4, chloroplastic (497 aa).

The next 14 membrane-spanning stretches (helical) occupy residues 4-24 (FPWL…IFLF), 35-55 (YTVC…CYHF), 84-104 (GLSI…TLAA), 111-131 (CKLF…PFSS), 134-154 (ILLF…LLAM), 167-187 (FILY…GIGL), 208-228 (ALEI…SPII), 242-262 (HYST…YGLV), 274-294 (SIFC…AASA), 305-325 (IAYS…SISD), 330-350 (GAIL…FLSG), 386-406 (LALP…GIIT), 411-431 (FLIM…LTPI), and 463-483 (FISI…DFIF).

The protein belongs to the complex I subunit 4 family.

It is found in the plastid. The protein localises to the chloroplast thylakoid membrane. It catalyses the reaction a plastoquinone + NADH + (n+1) H(+)(in) = a plastoquinol + NAD(+) + n H(+)(out). It carries out the reaction a plastoquinone + NADPH + (n+1) H(+)(in) = a plastoquinol + NADP(+) + n H(+)(out). This chain is NAD(P)H-quinone oxidoreductase chain 4, chloroplastic (ndhD), found in Lotus japonicus (Lotus corniculatus var. japonicus).